Consider the following 610-residue polypeptide: UvrABC system protein C (610 aa).

The 79-residue stretch at 16–94 (HQPGVYRMYN…IKQYLPKYNV (79 aa)) folds into the GIY-YIG domain. The UVR domain occupies 204–239 (NQVLELLVQKMEIASQQLKFEDAAKFRDQIQAIRRV).

The protein belongs to the UvrC family. Interacts with UvrB in an incision complex.

Its subcellular location is the cytoplasm. The UvrABC repair system catalyzes the recognition and processing of DNA lesions. UvrC both incises the 5' and 3' sides of the lesion. The N-terminal half is responsible for the 3' incision and the C-terminal half is responsible for the 5' incision. The protein is UvrABC system protein C of Vibrio vulnificus (strain CMCP6).